We begin with the raw amino-acid sequence, 890 residues long: Putative RNA-binding protein 15B (890 aa).

A disordered region spans residues 1-133 (MKRQSERDSS…AEPACPGSSA (133 aa)). The span at 10–20 (SPSGRGSSSSA) shows a compositional bias: low complexity. 2 stretches are compositionally biased toward basic and acidic residues: residues 22–34 (RPRE…EAGG) and 66–78 (GHRD…DANH). Over residues 86-99 (SGSGAGGGGRGGKA) the composition is skewed to gly residues. Phosphoserine occurs at positions 109 and 113. The span at 113–124 (SPLPPPPPPPGA) shows a compositional bias: pro residues. The region spanning 139–219 (KTLLISSLSP…RPLKVEPVYL (81 aa)) is the RRM 1 domain. Lysine 213 is covalently cross-linked (Glycyl lysine isopeptide (Lys-Gly) (interchain with G-Cter in SUMO2)). Positions 219–253 (LRGGGGSSRRSSSSSAAASTPPPGPPAPADPLGYL) are disordered. Low complexity predominate over residues 226–237 (SRRSSSSSAAAS). Over residues 238-247 (TPPPGPPAPA) the composition is skewed to pro residues. Phosphoserine is present on residues serine 265 and serine 267. 2 RRM domains span residues 337–414 (RNLF…YGKA) and 418–492 (TRLW…FAKA). Phosphothreonine is present on threonine 532. Residues 547 to 705 (EGDWTSPSKS…KPLEEPKHET (159 aa)) form a disordered region. 3 positions are modified to phosphoserine: serine 552, serine 556, and serine 562. 2 stretches are compositionally biased toward basic and acidic residues: residues 573–616 (RSGE…ERSR) and 626–646 (RGSD…EGTK). Positions 593 to 597 (RRKRR) match the Nuclear localization signal motif. Low complexity predominate over residues 647 to 657 (ESSSNSLSNSR). Positions 671-703 (EAADSSHGKKARDSERNHRTTEAEPKPLEEPKH) are enriched in basic and acidic residues. A Glycyl lysine isopeptide (Lys-Gly) (interchain with G-Cter in SUMO2) cross-link involves residue lysine 702. Residues 711 to 889 (LSEYAQTLQL…HMVIVIVRDT (179 aa)) form the SPOC domain. The interval 722 to 890 (WNGLLVLKNS…MVIVIVRDTA (169 aa)) is interaction with Epstein-Barr virus BMLF1.

Belongs to the RRM Spen family. In terms of assembly, component of the WMM complex, a N6-methyltransferase complex composed of a catalytic subcomplex, named MAC, and of an associated subcomplex, named MACOM. The MAC subcomplex is composed of METTL3 and METTL14. The MACOM subcomplex is composed of WTAP, ZC3H13, CBLL1/HAKAI, VIRMA, and, in some cases of RBM15 (RBM15 or RBM15B). May interact with NCOR2. Interacts with NXF1, the interaction is required to promote mRNA export. As to quaternary structure, (Microbial infection) Interacts (via the SPOC domain) with Epstein-Barr virus BMLF1 (via the N-terminus); the interaction is direct. Ubiquitously expressed.

It localises to the nucleus. The protein resides in the nucleoplasm. The protein localises to the nucleus speckle. Its subcellular location is the nucleus envelope. Functionally, RNA-binding protein that acts as a key regulator of N6-methyladenosine (m6A) methylation of RNAs, thereby regulating different processes, such as alternative splicing of mRNAs and X chromosome inactivation mediated by Xist RNA. Associated component of the WMM complex, a complex that mediates N6-methyladenosine (m6A) methylation of RNAs, a modification that plays a role in the efficiency of mRNA splicing and RNA processing. Plays a key role in m6A methylation, possibly by binding target RNAs and recruiting the WMM complex. Involved in random X inactivation mediated by Xist RNA: acts by binding Xist RNA and recruiting the WMM complex, which mediates m6A methylation, leading to target YTHDC1 reader on Xist RNA and promoting transcription repression activity of Xist. Functions in the regulation of alternative or illicit splicing, possibly by regulating m6A methylation. Inhibits pre-mRNA splicing. Also functions as a mRNA export factor by acting as a cofactor for the nuclear export receptor NXF1. The sequence is that of Putative RNA-binding protein 15B from Homo sapiens (Human).